Reading from the N-terminus, the 225-residue chain is MNSIEFPLFDRTTQNSVISTTLNDLSNWSRLSSLWPLLYGTSCCFIEFASLIGSRFDFDRYGLVPRSSPRQADLILTAGTVTMKMAPSLVRLYEQMPEPKYVIAMGACTITGGMFSTDSYSTVRGVDKLIPVDVYLPGCPPKPEAIIDAITKLRKKISREIYPDRTMSQRENRCFTTNHKFQVGHSIHTGNYDQGFLYQPTSTSEIPPETFFKYKSSVSSPELVN.

4 residues coordinate [4Fe-4S] cluster: cysteine 43, cysteine 44, cysteine 108, and cysteine 139.

Belongs to the complex I 20 kDa subunit family. NDH is composed of at least 16 different subunits, 5 of which are encoded in the nucleus. Requires [4Fe-4S] cluster as cofactor.

The protein localises to the plastid. The protein resides in the chloroplast thylakoid membrane. It catalyses the reaction a plastoquinone + NADH + (n+1) H(+)(in) = a plastoquinol + NAD(+) + n H(+)(out). It carries out the reaction a plastoquinone + NADPH + (n+1) H(+)(in) = a plastoquinol + NADP(+) + n H(+)(out). NDH shuttles electrons from NAD(P)H:plastoquinone, via FMN and iron-sulfur (Fe-S) centers, to quinones in the photosynthetic chain and possibly in a chloroplast respiratory chain. The immediate electron acceptor for the enzyme in this species is believed to be plastoquinone. Couples the redox reaction to proton translocation, and thus conserves the redox energy in a proton gradient. The protein is NAD(P)H-quinone oxidoreductase subunit K, chloroplastic of Lactuca sativa (Garden lettuce).